Reading from the N-terminus, the 743-residue chain is Putative metallophosphoesterase At3g03305 (743 aa).

A signal peptide spans 1 to 40; the sequence is MESIGDDDELRSKTVSLPRRISFTILLLLLLISLSTRVSG. The a divalent metal cation site is built by aspartate 66, histidine 68, and aspartate 101. 5 consecutive transmembrane segments (helical) span residues 514–534, 565–585, 623–643, 687–704, and 716–736; these read ILWP…CIII, MPVV…FPWF, VMVV…LVVC, LFRK…WKHF, and MNVV…LYVI.

This sequence belongs to the metallophosphoesterase superfamily. It depends on a divalent metal cation as a cofactor.

It localises to the membrane. This is Putative metallophosphoesterase At3g03305 from Arabidopsis thaliana (Mouse-ear cress).